We begin with the raw amino-acid sequence, 196 residues long: Ribosome maturation factor RimP (196 aa).

The tract at residues 163–196 (GLAPSKPTGPAPKRPKPKTNSSSNEPAAKKPRAE) is disordered.

It belongs to the RimP family.

The protein localises to the cytoplasm. Required for maturation of 30S ribosomal subunits. This chain is Ribosome maturation factor RimP, found in Stenotrophomonas maltophilia (strain R551-3).